A 92-amino-acid polypeptide reads, in one-letter code: Small ribosomal subunit protein uS19 (92 aa).

It belongs to the universal ribosomal protein uS19 family.

In terms of biological role, protein S19 forms a complex with S13 that binds strongly to the 16S ribosomal RNA. This Listeria innocua serovar 6a (strain ATCC BAA-680 / CLIP 11262) protein is Small ribosomal subunit protein uS19.